The chain runs to 169 residues: MVGLPTHTLSVLVEDTPGVLARVAALFSRRGFNIESLAVGATECKTMSRMTIVVSAEETPLEQVTKQLHKLINVIKVVEQEADNSLSRELALIKVRAEAGTRSQVIEAVHLFRARVIDVSLESLTVEATGDCSKIEALLRVLEPFGVREIVQSGVVSLSRGPRGIGTVR.

The ACT domain occupies 8–85 (TLSVLVEDTP…KVVEQEADNS (78 aa)).

It belongs to the acetolactate synthase small subunit family. Dimer of large and small chains.

The enzyme catalyses 2 pyruvate + H(+) = (2S)-2-acetolactate + CO2. Its pathway is amino-acid biosynthesis; L-isoleucine biosynthesis; L-isoleucine from 2-oxobutanoate: step 1/4. It functions in the pathway amino-acid biosynthesis; L-valine biosynthesis; L-valine from pyruvate: step 1/4. This Mycobacterium leprae (strain TN) protein is Acetolactate synthase small subunit (ilvH).